The sequence spans 580 residues: Formate--tetrahydrofolate ligase (580 aa).

Position 83-90 (83-90 (TPMGEGKT)) interacts with ATP.

The protein belongs to the formate--tetrahydrofolate ligase family.

The catalysed reaction is (6S)-5,6,7,8-tetrahydrofolate + formate + ATP = (6R)-10-formyltetrahydrofolate + ADP + phosphate. The protein operates within one-carbon metabolism; tetrahydrofolate interconversion. The polypeptide is Formate--tetrahydrofolate ligase (Haloquadratum walsbyi (strain DSM 16790 / HBSQ001)).